The sequence spans 385 residues: Succinate--CoA ligase [ADP-forming] subunit beta (385 aa).

The ATP-grasp domain occupies 9–240 (KEIFAKYGIP…ETQLPQLEVE (232 aa)). Residues K46, 53–55 (GRG), E98, T101, and E106 each bind ATP. Mg(2+) contacts are provided by N195 and D209. Residues N260 and 317–319 (GIL) contribute to the substrate site.

Belongs to the succinate/malate CoA ligase beta subunit family. As to quaternary structure, heterotetramer of two alpha and two beta subunits. It depends on Mg(2+) as a cofactor.

It carries out the reaction succinate + ATP + CoA = succinyl-CoA + ADP + phosphate. The catalysed reaction is GTP + succinate + CoA = succinyl-CoA + GDP + phosphate. Its pathway is carbohydrate metabolism; tricarboxylic acid cycle; succinate from succinyl-CoA (ligase route): step 1/1. Its function is as follows. Succinyl-CoA synthetase functions in the citric acid cycle (TCA), coupling the hydrolysis of succinyl-CoA to the synthesis of either ATP or GTP and thus represents the only step of substrate-level phosphorylation in the TCA. The beta subunit provides nucleotide specificity of the enzyme and binds the substrate succinate, while the binding sites for coenzyme A and phosphate are found in the alpha subunit. In Aquifex aeolicus (strain VF5), this protein is Succinate--CoA ligase [ADP-forming] subunit beta.